Reading from the N-terminus, the 159-residue chain is Globin-like protein (159 aa).

A Globin domain is found at 1 to 152 (MSMNRQEISD…FNAESQTHLK (152 aa)). Residue H101 coordinates heme.

This sequence belongs to the globin family. Homodimer. In terms of tissue distribution, expressed mainly in a subset of neuronal cells and in head muscular tissue.

It localises to the cytoplasm. Functionally, may be a globin and may play a role in oxygen transport. The chain is Globin-like protein (glb-1) from Caenorhabditis elegans.